A 121-amino-acid polypeptide reads, in one-letter code: Auxin-responsive protein SAUR32 (121 aa).

This sequence belongs to the ARG7 family. Expressed in roots, leaves and stems.

Its subcellular location is the nucleus. It is found in the cytoplasm. In terms of biological role, may play a role in the apical hook development. The protein is Auxin-responsive protein SAUR32 of Arabidopsis thaliana (Mouse-ear cress).